Here is a 157-residue protein sequence, read N- to C-terminus: Transcription factor HES-2 (157 aa).

A bHLH domain is found at 13–70; sequence LRKNLKPLLEKRRRARINESLSQLKGLVLPLLGAETSRSSKLEKADILEMTVRFLQEQ. Positions 86–119 constitute an Orange domain; sequence YLEGYRACLARLARVLPACSVLEPAVSARLLEHL. Residues 124 to 157 are disordered; the sequence is VSDDSPSLTLPPAPAPAPSPPVPPPGSSGLWRPW. Residues 132–149 show a composition bias toward pro residues; the sequence is TLPPAPAPAPSPPVPPPG. A WRPW motif motif is present at residues 154 to 157; sequence WRPW.

As to quaternary structure, transcription repression requires formation of a complex with a corepressor protein of the Groucho/TLE family.

Its subcellular location is the nucleus. Transcriptional repressor of genes that require a bHLH protein for their transcription. The polypeptide is Transcription factor HES-2 (Hes2) (Mus musculus (Mouse)).